A 202-amino-acid polypeptide reads, in one-letter code: Peptidyl-tRNA hydrolase (202 aa).

Tyr14 provides a ligand contact to tRNA. His19 serves as the catalytic Proton acceptor. Positions 64, 66, and 112 each coordinate tRNA.

The protein belongs to the PTH family. Monomer.

The protein resides in the cytoplasm. The catalysed reaction is an N-acyl-L-alpha-aminoacyl-tRNA + H2O = an N-acyl-L-amino acid + a tRNA + H(+). Functionally, hydrolyzes ribosome-free peptidyl-tRNAs (with 1 or more amino acids incorporated), which drop off the ribosome during protein synthesis, or as a result of ribosome stalling. Catalyzes the release of premature peptidyl moieties from peptidyl-tRNA molecules trapped in stalled 50S ribosomal subunits, and thus maintains levels of free tRNAs and 50S ribosomes. The chain is Peptidyl-tRNA hydrolase from Nitrobacter winogradskyi (strain ATCC 25391 / DSM 10237 / CIP 104748 / NCIMB 11846 / Nb-255).